Consider the following 130-residue polypeptide: uncharacterized protein (130 aa).

This is an uncharacterized protein from Methanocaldococcus jannaschii (strain ATCC 43067 / DSM 2661 / JAL-1 / JCM 10045 / NBRC 100440) (Methanococcus jannaschii).